Reading from the N-terminus, the 850-residue chain is cAMP-inducible prespore protein D7 (850 aa).

The N-terminal stretch at 1 to 24 (MYSKKYTSFVIVLILSCIISTCTS) is a signal peptide. Positions 119–130 (QNNNIGSSIGDS) are enriched in low complexity. Disordered stretches follow at residues 119-167 (QNNN…SKTT) and 787-850 (DAEL…QNQK). The span at 131–143 (TGASTSPQFQSIN) shows a compositional bias: polar residues. Positions 144–154 (GLSGASQSSGS) are enriched in low complexity. A compositionally biased stretch (basic and acidic residues) spans 787-798 (DAELAKNNKQEN). Residues 801–820 (ENLVQEKQQSPDQIKNQLKN) show a composition bias toward polar residues. The span at 837–850 (EKNQQLLEQEQNQK) shows a compositional bias: low complexity.

This chain is cAMP-inducible prespore protein D7 (D7), found in Dictyostelium discoideum (Social amoeba).